The following is a 187-amino-acid chain: UPF0301 protein YqgE (187 aa).

The protein belongs to the UPF0301 (AlgH) family.

This is UPF0301 protein YqgE from Salmonella agona (strain SL483).